We begin with the raw amino-acid sequence, 70 residues long: ATP synthase subunit c (70 aa).

2 helical membrane passes run 5-25 (AAGIAAGLAAVGGAIAVAIIV) and 47-67 (FIGVPLAEAVPIIAIVVSFIL).

It belongs to the ATPase C chain family. F-type ATPases have 2 components, F(1) - the catalytic core - and F(0) - the membrane proton channel. F(1) has five subunits: alpha(3), beta(3), gamma(1), delta(1), epsilon(1). F(0) has three main subunits: a(1), b(2) and c(10-14). The alpha and beta chains form an alternating ring which encloses part of the gamma chain. F(1) is attached to F(0) by a central stalk formed by the gamma and epsilon chains, while a peripheral stalk is formed by the delta and b chains.

It is found in the cell membrane. Functionally, f(1)F(0) ATP synthase produces ATP from ADP in the presence of a proton or sodium gradient. F-type ATPases consist of two structural domains, F(1) containing the extramembraneous catalytic core and F(0) containing the membrane proton channel, linked together by a central stalk and a peripheral stalk. During catalysis, ATP synthesis in the catalytic domain of F(1) is coupled via a rotary mechanism of the central stalk subunits to proton translocation. Key component of the F(0) channel; it plays a direct role in translocation across the membrane. A homomeric c-ring of between 10-14 subunits forms the central stalk rotor element with the F(1) delta and epsilon subunits. The chain is ATP synthase subunit c from Halalkalibacterium halodurans (strain ATCC BAA-125 / DSM 18197 / FERM 7344 / JCM 9153 / C-125) (Bacillus halodurans).